The chain runs to 174 residues: Frataxin homolog, mitochondrial (174 aa).

Residues 1–21 constitute a mitochondrion transit peptide; it reads MIKRSLASLVRVSSVMGRRYM.

It belongs to the frataxin family. Monomer. Forms a 24-mer complex made up of 8 copies of a trimeric subcomplex. Increments in mitochondrial iron uptake induce stepwise assembly of species ranging from trimers to 24-mers. Interacts with ISU1 with a 1 to 1 stoichiometry; the interaction is direct. Interacts with YHB1, SDH1, SDH2, AIM45 and CIR1. Post-translationally, processed in two steps by mitochondrial processing peptidase (MPP). MPP first cleaves the precursor to intermediate form and subsequently converts the intermediate to mature size protein.

The protein resides in the mitochondrion matrix. The enzyme catalyses 4 Fe(2+) + O2 + 4 H(+) = 4 Fe(3+) + 2 H2O. In terms of biological role, promotes the biosynthesis of heme as well as the assembly and repair of iron-sulfur clusters by delivering Fe(2+) to proteins involved in these pathways. Plays a role in the protection against iron-catalyzed oxidative stress through its ability to catalyze the oxidation of Fe(2+) to Fe(3+). Can store large amounts of the metal in the form of a ferrihydrite mineral by oligomerization. May be involved in regulation of the mitochondrial electron transport chain. The protein is Frataxin homolog, mitochondrial of Saccharomyces cerevisiae (strain ATCC 204508 / S288c) (Baker's yeast).